The primary structure comprises 399 residues: Elongation factor Tu (399 aa).

A tr-type G domain is found at 10–209; the sequence is KPHVNIGTIG…EVDAYIPTPE (200 aa). The interval 19 to 26 is G1; that stretch reads GHVDHGKT. Residue 19–26 coordinates GTP; that stretch reads GHVDHGKT. Mg(2+) is bound at residue threonine 26. Residues 60-64 are G2; that stretch reads GITIA. Residues 81–84 form a G3 region; that stretch reads DCPG. Residues 81 to 85 and 136 to 139 contribute to the GTP site; these read DCPGH and NKQD. A G4 region spans residues 136-139; sequence NKQD. The G5 stretch occupies residues 174–176; it reads SAL.

This sequence belongs to the TRAFAC class translation factor GTPase superfamily. Classic translation factor GTPase family. EF-Tu/EF-1A subfamily. Monomer.

The protein resides in the cytoplasm. It catalyses the reaction GTP + H2O = GDP + phosphate + H(+). Its function is as follows. GTP hydrolase that promotes the GTP-dependent binding of aminoacyl-tRNA to the A-site of ribosomes during protein biosynthesis. This is Elongation factor Tu from Helicobacter pylori (strain Shi470).